The following is a 750-amino-acid chain: 3-isopropylmalate dehydratase (750 aa).

Positions 353, 413, and 416 each coordinate [4Fe-4S] cluster. A disordered region spans residues 492–524; that stretch reads KYDGSPEVFKSTQDTTPAVKPPQPASDSSSSGG.

It belongs to the aconitase/IPM isomerase family. In terms of assembly, monomer. [4Fe-4S] cluster is required as a cofactor.

It carries out the reaction (2R,3S)-3-isopropylmalate = (2S)-2-isopropylmalate. It functions in the pathway amino-acid biosynthesis; L-leucine biosynthesis; L-leucine from 3-methyl-2-oxobutanoate: step 2/4. Catalyzes the isomerization between 2-isopropylmalate and 3-isopropylmalate, via the formation of 2-isopropylmaleate. The polypeptide is 3-isopropylmalate dehydratase (LEU1) (Rhizopus niveus).